We begin with the raw amino-acid sequence, 391 residues long: Pyoverdine export membrane fusion protein PvdR (391 aa).

A signal peptide spans Met1–Ala24. Positions Ile108–Glu180 form a coiled coil. Residues Leu263 to Gly289 form a disordered region. A compositionally biased stretch (gly residues) spans Gln275–Gly289.

The protein belongs to the membrane fusion protein (MFP) (TC 8.A.1) family. In terms of assembly, part of the tripartite efflux system PvdRT-OpmQ, which is composed of an inner membrane component with both ATPase and permease domains, PvdT, a periplasmic membrane fusion protein, PvdR, and an outer membrane component, OpmQ.

It localises to the periplasm. In terms of biological role, part of the tripartite efflux system PvdRT-OpmQ required for the secretion into the extracellular milieu of the siderophore pyoverdine (PVD), which is involved in iron acquisition. This subunit is an adapter protein that stimulates the ATPase activity of PvdT and connects the inner and outer membrane components. The system is responsible for export of newly synthesized PVD after the final steps of biosynthesis have taken place in the periplasm. It is also responsible for recycling of PVD after internalization of ferri-PVD into the periplasm by the outer-membrane receptor FpvA and release of iron from PVD, thus making PVD available for new cycles of iron uptake. In addition, can expel unwanted metals complexed with PVD from the periplasm into the extracellular medium. Does not contribute to resistance to antibiotics belonging to the classes of tetracyclines, aminoglycosides, beta-lactams and macrolides, and chloramphenicol. This chain is Pyoverdine export membrane fusion protein PvdR, found in Pseudomonas aeruginosa (strain ATCC 15692 / DSM 22644 / CIP 104116 / JCM 14847 / LMG 12228 / 1C / PRS 101 / PAO1).